The chain runs to 238 residues: C-type lectin domain family 4 member A (238 aa).

At 1–48 the chain is on the cytoplasmic side; the sequence is MASEITYAEVKFKNESNSLHTYSESPAAPREKPIRDLRKPGSPSLLLT. Positions 5–10 match the ITIM motif motif; that stretch reads ITYAEV. A helical; Signal-anchor for type II membrane protein transmembrane segment spans residues 49-69; that stretch reads SLMLLLLLLAITFLVAFIIYF. Residues 70–238 are Extracellular-facing; that stretch reads QKYSQLLEEK…SVCQMKKINL (169 aa). An N-linked (GlcNAc...) asparagine glycan is attached at Asn91. A disulfide bond links Cys107 and Cys118. The 108-residue stretch at 126–233 folds into the C-type lectin domain; it reads SSASWNKSEE…SLKQKSVCQM (108 aa). N-linked (GlcNAc...) asparagine glycosylation is found at Asn131 and Asn136. Disulfide bonds link Cys137–Cys231 and Cys205–Cys223. Residues Val146, Glu152, Glu197, Ser199, and Glu203 each coordinate Ca(2+). Alpha-D-mannopyranose is bound by residues 197-199 and Glu203; that span reads EPS. N-acetyl-D-glucosamine is bound at residue 209-211; sequence IYR. Ca(2+)-binding residues include Asn219 and Asp220.

May interact with PTPN6 via its ITIM site. As to expression, expressed in splenic antigen-presenting cells including B-cells, monocytes/macrophages, and dendritic cells (at protein level). Expressed in spleen and lymph node and slightly increased with dendritic cell maturation.

It localises to the cell membrane. Its function is as follows. May be involved in regulating immune reactivity. May play a role in modulating dendritic cells (DC) differentiation and/or maturation. May be involved in the inhibition of B-cell-receptor-mediated calcium mobilization and protein tyrosine phosphorylation. C-type lectin receptor that binds carbohydrates mannose and fucose but also weakly interacts with N-acetylglucosamine (GlcNAc) in a Ca(2+)-dependent manner. Involved in regulating immune reactivity. Once triggered by antigen, it is internalized by clathrin-dependent endocytosis and delivers its antigenic cargo into the antigen presentation pathway resulting in cross-priming of CD8(+) T cells. This cross-presentation and cross-priming are enhanced by TLR7 and TLR8 agonists with increased expansion of the CD8(+) T cells, high production of IFNG and TNF with reduced levels of IL4, IL5 and IL13. In plasmacytoid dendritic cells, inhibits TLR9-mediated IFNA and TNF production. May be involved via its ITIM motif (immunoreceptor tyrosine-based inhibitory motifs) in the inhibition of B-cell-receptor-mediated calcium mobilization and protein tyrosine phosphorylation. The polypeptide is C-type lectin domain family 4 member A (Clec4a) (Mus musculus (Mouse)).